A 127-amino-acid chain; its full sequence is Prophage antitermination protein Q homolog QuuD (127 aa).

This sequence belongs to the phage antitermination Q type 1 family.

Its function is as follows. Positively regulate expression of some phage genes. Bacterial host RNA polymerase modified by antitermination proteins transcribes through termination sites that otherwise prevent expression of the regulated genes. The polypeptide is Prophage antitermination protein Q homolog QuuD (quuD) (Escherichia coli (strain K12)).